Reading from the N-terminus, the 115-residue chain is Insulin-like peptide IlO1_i1 (115 aa).

The N-terminal stretch at 1–20 (MFVYTTIMLLLLAEINHSQG) is a signal peptide. Disulfide bonds link cysteine 40-cysteine 101, cysteine 52-cysteine 114, and cysteine 100-cysteine 105. Positions 59 to 93 (RRNRITGLDQRSIFESNLLAKRFLISRRQIVNNRR) are cleaved as a propeptide — c peptide.

Belongs to the insulin family. In terms of tissue distribution, expressed in tentacles.

The protein resides in the secreted. Heterodimer with unknown function. Surprisingly, the truncated synthetic analog (dimer of 27-58 and 94-115) does not bind to long insulin receptor (HIR-B) and insulin-like growth factor 1 receptor. This truncated synthetic analog shows very weak inhibitory activity on different voltage-gated channels. The chain is Insulin-like peptide IlO1_i1 from Oulactis sp. (Sea anemone).